The sequence spans 489 residues: Lysine-specific permease LysP (489 aa).

Residues 2 to 22 (VSETKTTEAPGLRRELKARHL) are Cytoplasmic-facing. Residues 23–43 (TMIAIGGSIGTGLFVASGATI) traverse the membrane as a helical segment. Over 44–45 (SQ) the chain is Periplasmic. Residues 46–66 (AGPGGALLSYMLIGLMVYFLM) form a helical membrane-spanning segment. The Cytoplasmic segment spans residues 67–105 (TSLGELAAYMPVSGSFATYGQNYVEEGFGFALGWNYWYN). Residues 106–126 (WAVTIAVDLVAAQLVMSWWFP) traverse the membrane as a helical segment. The Periplasmic portion of the chain corresponds to 127 to 128 (DT). A helical transmembrane segment spans residues 129–149 (PGWIWSALFLGVIFLLNYISV). At 150-161 (RGFGEAEYWFSL) the chain is on the cytoplasmic side. Residues 162–182 (IKVTTVIVFIIVGVLMIIGIF) traverse the membrane as a helical segment. Residues 183–197 (KGAQPAGWSNWTIGE) lie on the Periplasmic side of the membrane. A helical transmembrane segment spans residues 198–218 (APFAGGFAAMIGVAMIVGFSF). Residues 219 to 244 (QGTELIGIAAGESEDPAKNIPRAVRQ) are Cytoplasmic-facing. The chain crosses the membrane as a helical span at residues 245-265 (VFWRILLFYVFAILIISLIIP). The Periplasmic segment spans residues 266–290 (YTDPSLLRNDVKDISVSPFTLVFQH). Residues 291–311 (AGLLSAAAVMNAVILTAVLSA) traverse the membrane as a helical segment. Residues 312 to 346 (GNSGMYASTRMLYTLACDGKAPRIFAKLSRGGVPR) are Cytoplasmic-facing. The chain crosses the membrane as a helical span at residues 347–367 (NALYATTVIAGLCFLTSMFGN). Topologically, residues 368 to 370 (QTV) are periplasmic. A helical membrane pass occupies residues 371–391 (YLWLLNTSGMTGFIAWLGIAI). The Cytoplasmic portion of the chain corresponds to 392-413 (SHYRFRRGYVLQGHDINDLPYR). The helical transmembrane segment at 414 to 434 (SGFFPLGPIFAFILCLIITLG) threads the bilayer. Residues 435–446 (QNYEAFLKDTID) lie on the Periplasmic side of the membrane. A helical transmembrane segment spans residues 447–467 (WGGVAATYIGIPLFLIIWFGY). Residues 468–489 (KLIKGTHFVRYSEMKFPQNDKK) lie on the Cytoplasmic side of the membrane.

Belongs to the amino acid-polyamine-organocation (APC) superfamily. Amino acid transporter (AAT) (TC 2.A.3.1) family. Interacts strongly with the transcriptional activator CadC in the absence of lysine or at low lysine concentrations. Interaction is markedly attenuated under increasing lysine levels. Concomitant pH-dependent protonation of periplasmic amino acids in both proteins dissolves their electrostatic connections resulting in further destabilization of the CadC/LysP interaction. Low pH promotes oligomerization of LysP.

The protein localises to the cell inner membrane. It carries out the reaction L-lysine(out) + H(+)(out) = L-lysine(in) + H(+)(in). Permease involved in lysine uptake. In addition, functions as a lysine sensor that mediates the lysine-dependent regulation of the transcriptional activator CadC. In the absence of lysine, or at low lysine concentrations, LysP inhibits CadC by an interaction with the transmembrane domain of CadC. In the presence of lysine, LysP loses its ability to interact with and inhibit CadC, and acts as a lysine permease. This chain is Lysine-specific permease LysP, found in Escherichia coli (strain K12).